A 196-amino-acid polypeptide reads, in one-letter code: Hypoxanthine/guanine phosphoribosyltransferase (196 aa).

Belongs to the purine/pyrimidine phosphoribosyltransferase family. Archaeal HPRT subfamily. Homodimer.

The protein localises to the cytoplasm. The enzyme catalyses IMP + diphosphate = hypoxanthine + 5-phospho-alpha-D-ribose 1-diphosphate. The catalysed reaction is GMP + diphosphate = guanine + 5-phospho-alpha-D-ribose 1-diphosphate. The protein operates within purine metabolism; IMP biosynthesis via salvage pathway; IMP from hypoxanthine: step 1/1. Catalyzes a salvage reaction resulting in the formation of IMP that is energically less costly than de novo synthesis. The sequence is that of Hypoxanthine/guanine phosphoribosyltransferase from Methanocaldococcus sp. (strain FS406-22).